Consider the following 396-residue polypeptide: Apolipoprotein A-IV (396 aa).

The N-terminal stretch at 1–20 is a signal peptide; it reads MFLKAVVLTLALVAVAGARA. A run of 13 repeats spans residues 33–54, 60–81, 82–103, 115–136, 137–158, 159–180, 181–202, 203–224, 225–246, 247–268, 269–286, 287–308, and 309–330. Residues 33–330 are 13 X 22 AA approximate tandem repeats; that stretch reads DYFSQLSNNA…QMEQLRQKLG (298 aa). The interval 361-396 is disordered; sequence KESQDKTLSLPELEQQQEQQQEQQQEQVQMLAPLES. Positions 374 to 389 are enriched in low complexity; sequence EQQQEQQQEQQQEQVQ.

It belongs to the apolipoprotein A1/A4/E family. In terms of assembly, homodimer. Phosphorylation sites are present in the extracellular medium. In terms of tissue distribution, synthesized primarily in the intestine and secreted in plasma.

The protein localises to the secreted. In terms of biological role, may have a role in chylomicrons and VLDL secretion and catabolism. Required for efficient activation of lipoprotein lipase by ApoC-II; potent activator of LCAT. Apoa-IV is a major component of HDL and chylomicrons. This chain is Apolipoprotein A-IV, found in Homo sapiens (Human).